A 2164-amino-acid chain; its full sequence is Hemagglutinin A (2164 aa).

Positions 1 to 25 (MRKLNSLFSLAVLLSLLCWGQTAAA) are cleaved as a signal peptide. 3 peptidase C25-like regions span residues 26–539 (QGGP…TPPP), 540–991 (GGSS…TPPP), and 992–1443 (GGTS…TPPP). Disordered stretches follow at residues 493-512 (WDAP…LSES) and 520-541 (SWKT…PPGG). A compositionally biased stretch (low complexity) spans 496–508 (PNGTPNPNPGTTT).

It belongs to the peptidase C25 family.

Agglutinates erythrocytes. This is Hemagglutinin A (hagA) from Porphyromonas gingivalis (strain ATCC BAA-308 / W83).